The chain runs to 433 residues: Enolase (433 aa).

Residue glutamine 164 participates in (2R)-2-phosphoglycerate binding. Residue glutamate 206 is the Proton donor of the active site. Mg(2+) is bound by residues aspartate 243, glutamate 289, and aspartate 316. Residues lysine 341, arginine 370, serine 371, and lysine 392 each coordinate (2R)-2-phosphoglycerate. Lysine 341 acts as the Proton acceptor in catalysis.

It belongs to the enolase family. Requires Mg(2+) as cofactor.

Its subcellular location is the cytoplasm. The protein resides in the secreted. The protein localises to the cell surface. The catalysed reaction is (2R)-2-phosphoglycerate = phosphoenolpyruvate + H2O. Its pathway is carbohydrate degradation; glycolysis; pyruvate from D-glyceraldehyde 3-phosphate: step 4/5. Its function is as follows. Catalyzes the reversible conversion of 2-phosphoglycerate (2-PG) into phosphoenolpyruvate (PEP). It is essential for the degradation of carbohydrates via glycolysis. The polypeptide is Enolase (Borrelia hermsii (strain HS1 / DAH)).